The chain runs to 429 residues: Adenylosuccinate synthetase (429 aa).

Residues 12-18 (GDEGKGK) and 40-42 (GHT) contribute to the GTP site. Asp13 functions as the Proton acceptor in the catalytic mechanism. Mg(2+) is bound by residues Asp13 and Gly40. Residues 13–16 (DEGK), 38–41 (NAGH), Thr129, Arg143, Gln223, Thr238, and Arg302 contribute to the IMP site. Residue His41 is the Proton donor of the active site. 298-304 (TVTGRPR) is a binding site for substrate. GTP-binding positions include Arg304, 330–332 (KLD), and 412–414 (STS).

It belongs to the adenylosuccinate synthetase family. As to quaternary structure, homodimer. Requires Mg(2+) as cofactor.

The protein resides in the cytoplasm. The catalysed reaction is IMP + L-aspartate + GTP = N(6)-(1,2-dicarboxyethyl)-AMP + GDP + phosphate + 2 H(+). Its pathway is purine metabolism; AMP biosynthesis via de novo pathway; AMP from IMP: step 1/2. Functionally, plays an important role in the de novo pathway of purine nucleotide biosynthesis. Catalyzes the first committed step in the biosynthesis of AMP from IMP. This Rhodospirillum rubrum (strain ATCC 11170 / ATH 1.1.1 / DSM 467 / LMG 4362 / NCIMB 8255 / S1) protein is Adenylosuccinate synthetase.